The primary structure comprises 805 residues: Probable exo-1,4-beta-xylosidase xlnD (805 aa).

Residues 1 to 17 (MAVAALALLALLPQALG) form the signal peptide. N-linked (GlcNAc...) asparagine glycosylation is found at N20, N115, N140, N235, and N244. D308 is a catalytic residue. 12 N-linked (GlcNAc...) asparagine glycosylation sites follow: N350, N383, N405, N434, N445, N486, N490, N622, N653, N667, N689, and N711.

Belongs to the glycosyl hydrolase 3 family.

It localises to the secreted. It carries out the reaction Hydrolysis of (1-&gt;4)-beta-D-xylans, to remove successive D-xylose residues from the non-reducing termini.. Its pathway is glycan degradation; xylan degradation. In terms of biological role, xylan 1,4-beta-xylosidase involved in the hydrolysis of xylan, a major structural heterogeneous polysaccharide found in plant biomass representing the second most abundant polysaccharide in the biosphere, after cellulose. In Aspergillus aculeatus, this protein is Probable exo-1,4-beta-xylosidase xlnD (xlnD).